We begin with the raw amino-acid sequence, 406 residues long: DNA primase DnaG (406 aa).

The region spanning 167 to 253 is the Toprim domain; it reads DAVVIVEGRA…CVEDLSRRTV (87 aa). Residues glutamate 173, aspartate 215, and aspartate 217 each contribute to the Mg(2+) site. The segment at 259–309 is disordered; sequence NKTPASAAAPIATTQSETAATDGSATPAPTPEPAPDTAPSPDSDGDDTEAA. Over residues 261-272 the composition is skewed to low complexity; it reads TPASAAAPIATT. Pro residues predominate over residues 286 to 296; the sequence is APTPEPAPDTA.

The protein belongs to the archaeal DnaG primase family. In terms of assembly, forms a ternary complex with MCM helicase and DNA. Requires Mg(2+) as cofactor.

The catalysed reaction is ssDNA + n NTP = ssDNA/pppN(pN)n-1 hybrid + (n-1) diphosphate.. Functionally, RNA polymerase that catalyzes the synthesis of short RNA molecules used as primers for DNA polymerase during DNA replication. This chain is DNA primase DnaG, found in Halobacterium salinarum (strain ATCC 29341 / DSM 671 / R1).